The chain runs to 518 residues: Mitochondrial 2-methylisocitrate lyase (518 aa).

Belongs to the isocitrate lyase/PEP mutase superfamily. Isocitrate lyase family.

The protein localises to the mitochondrion matrix. It is found in the cytoplasm. The enzyme catalyses (2S,3R)-3-hydroxybutane-1,2,3-tricarboxylate = pyruvate + succinate. The protein operates within organic acid metabolism; propanoate degradation. Functionally, catalyzes the formation of pyruvate and succinate from 2-methylisocitrate during the metabolism of endogenous propionyl-CoA. Does not act on isocitrate. This Schizosaccharomyces pombe (strain 972 / ATCC 24843) (Fission yeast) protein is Mitochondrial 2-methylisocitrate lyase (icl2).